A 65-amino-acid chain; its full sequence is SPbeta prophage-derived uncharacterized protein YorO (65 aa).

In Bacillus subtilis (strain 168), this protein is SPbeta prophage-derived uncharacterized protein YorO (yorO).